The sequence spans 119 residues: Gibberellin-regulated protein 9 (119 aa).

Positions 1 to 24 are cleaved as a signal peptide; sequence MKKMNVVAFVTLIISFLLLSQVLA.

Belongs to the GASA family. Six disulfide bonds may be present.

The protein localises to the secreted. Gibberellin-regulated protein that may function in hormonal controlled steps of development such as seed germination, flowering and seed maturation. In Arabidopsis thaliana (Mouse-ear cress), this protein is Gibberellin-regulated protein 9 (GASA9).